The following is a 250-amino-acid chain: Silencing boundary-establishment protein FUB1 (250 aa).

A disordered region spans residues 179-250 (PDWSGGLPNP…GFGGSGSGFI (72 aa)). Over residues 202–213 (PNRRPAPRREDM) the composition is skewed to basic and acidic residues. A compositionally biased stretch (gly residues) spans 229-250 (PGSGGFGGSGSGGFGGSGSGFI).

The protein belongs to the proteasome inhibitor PI31 family. As to quaternary structure, interacts with the 20S proteasome.

Its function is as follows. Plays a role in the establishment of transcriptional silencing boundaries, preventing the propagation of heterochromatic silencing. The sequence is that of Silencing boundary-establishment protein FUB1 from Saccharomyces cerevisiae (strain ATCC 204508 / S288c) (Baker's yeast).